Reading from the N-terminus, the 440-residue chain is Trigger factor (440 aa).

In terms of domain architecture, PPIase FKBP-type spans 163–248; it reads GDGVTVDFEG…VKKIESAHLP (86 aa).

This sequence belongs to the FKBP-type PPIase family. Tig subfamily.

The protein localises to the cytoplasm. It carries out the reaction [protein]-peptidylproline (omega=180) = [protein]-peptidylproline (omega=0). Involved in protein export. Acts as a chaperone by maintaining the newly synthesized protein in an open conformation. Functions as a peptidyl-prolyl cis-trans isomerase. The chain is Trigger factor from Verminephrobacter eiseniae (strain EF01-2).